Here is a 141-residue protein sequence, read N- to C-terminus: Large ribosomal subunit protein uL11 (141 aa).

It belongs to the universal ribosomal protein uL11 family. As to quaternary structure, part of the ribosomal stalk of the 50S ribosomal subunit. Interacts with L10 and the large rRNA to form the base of the stalk. L10 forms an elongated spine to which L12 dimers bind in a sequential fashion forming a multimeric L10(L12)X complex. In terms of processing, one or more lysine residues are methylated.

Its function is as follows. Forms part of the ribosomal stalk which helps the ribosome interact with GTP-bound translation factors. In Agathobacter rectalis (strain ATCC 33656 / DSM 3377 / JCM 17463 / KCTC 5835 / VPI 0990) (Eubacterium rectale), this protein is Large ribosomal subunit protein uL11.